A 100-amino-acid chain; its full sequence is Defensin-B4 (100 aa).

A signal peptide spans 1–22 (MRASLLLFILLVYLAHAPQAQG). Positions 23–26 (VFGP) are excised as a propeptide. Disulfide bonds link C29–C56, C36–C50, and C40–C57. Residues 60 to 100 (STGTSSSQGSHEVPVINSEPALESKPEPQDTQEEEATMVSE) form a disordered region. Acidic residues predominate over residues 89–100 (DTQEEEATMVSE).

This sequence belongs to the beta-defensin family. In terms of tissue distribution, highly expressed in kidney, lowly expressed in spleen, and expressed at lower levels in lung.

Its subcellular location is the secreted. Functionally, has antimicrobial activity. In Ornithorhynchus anatinus (Duckbill platypus), this protein is Defensin-B4.